The primary structure comprises 101 residues: Urease subunit beta (101 aa).

This sequence belongs to the urease beta subunit family. In terms of assembly, heterotrimer of UreA (gamma), UreB (beta) and UreC (alpha) subunits. Three heterotrimers associate to form the active enzyme.

It is found in the cytoplasm. The enzyme catalyses urea + 2 H2O + H(+) = hydrogencarbonate + 2 NH4(+). The protein operates within nitrogen metabolism; urea degradation; CO(2) and NH(3) from urea (urease route): step 1/1. This Burkholderia orbicola (strain AU 1054) protein is Urease subunit beta.